The chain runs to 309 residues: Probable pyridoxal 5'-phosphate synthase subunit PDX1 (309 aa).

Asp40 provides a ligand contact to D-ribose 5-phosphate. Catalysis depends on Lys97, which acts as the Schiff-base intermediate with D-ribose 5-phosphate. D-ribose 5-phosphate is bound at residue Gly169. Arg181 lines the D-glyceraldehyde 3-phosphate pocket. D-ribose 5-phosphate-binding positions include Gly230 and 251–252 (GS).

It belongs to the PdxS/SNZ family.

The catalysed reaction is aldehydo-D-ribose 5-phosphate + D-glyceraldehyde 3-phosphate + L-glutamine = pyridoxal 5'-phosphate + L-glutamate + phosphate + 3 H2O + H(+). The protein operates within cofactor biosynthesis; pyridoxal 5'-phosphate biosynthesis. In terms of biological role, catalyzes the formation of pyridoxal 5'-phosphate from ribose 5-phosphate (RBP), glyceraldehyde 3-phosphate (G3P) and ammonia. The ammonia is provided by PDX2. Can also use ribulose 5-phosphate and dihydroxyacetone phosphate as substrates, resulting from enzyme-catalyzed isomerization of RBP and G3P, respectively. Also plays an indirect role in resistance to singlet oxygen-generating photosensitizers. The sequence is that of Probable pyridoxal 5'-phosphate synthase subunit PDX1 (PDX1) from Ginkgo biloba (Ginkgo).